The sequence spans 234 residues: ATP synthase subunit a 1 (234 aa).

5 consecutive transmembrane segments (helical) span residues 20 to 40 (ETVVTTWLIMLVLVVASILLT), 76 to 96 (LLPLIGTFWIFLPVANLLGVI), 105 to 125 (DLSVTAALALVVFFAVHAYGV), 162 to 184 (LFGNIMSLEMAALLILLVAGFLA), and 195 to 215 (EALVQAYIFGMLALIYVAGAM).

This sequence belongs to the ATPase A chain family. As to quaternary structure, F-type ATPases have 2 components, CF(1) - the catalytic core - and CF(0) - the membrane proton channel. CF(1) has five subunits: alpha(3), beta(3), gamma(1), delta(1), epsilon(1). CF(0) has three main subunits: a(1), b(2) and c(9-12). The alpha and beta chains form an alternating ring which encloses part of the gamma chain. CF(1) is attached to CF(0) by a central stalk formed by the gamma and epsilon chains, while a peripheral stalk is formed by the delta and b chains.

It localises to the cell inner membrane. In terms of biological role, key component of the proton channel; it plays a direct role in the translocation of protons across the membrane. The protein is ATP synthase subunit a 1 of Hahella chejuensis (strain KCTC 2396).